Here is a 199-residue protein sequence, read N- to C-terminus: MSNYPKPINRLIEALSYLPGIGPKTAERLAFHIVSMDETKVNHLITALQDSRDKVFECSTCNNLTDKDPCTICQDESRDSNLICVVQDARDVTAIEKVQDFQGKYHVLQGVISPMEGIGPDDLNLKALMDRIQGEGITELVVATDPTVEGEATAMYLNKLVKPLGVRVTRLAYGLPMGGDLEYADEMTLQQAFEGRKEL.

Residues 58 to 73 (CSTCNNLTDKDPCTIC) form a C4-type zinc finger. The region spanning 81–176 (NLICVVQDAR…RVTRLAYGLP (96 aa)) is the Toprim domain.

Belongs to the RecR family.

In terms of biological role, may play a role in DNA repair. It seems to be involved in an RecBC-independent recombinational process of DNA repair. It may act with RecF and RecO. The polypeptide is Recombination protein RecR (Natranaerobius thermophilus (strain ATCC BAA-1301 / DSM 18059 / JW/NM-WN-LF)).